The following is a 278-amino-acid chain: Diaminopimelate epimerase (278 aa).

N13, Q46, and N65 together coordinate substrate. The Proton donor role is filled by C74. Substrate is bound by residues 75-76 (GN), N157, N190, and 208-209 (ER). C217 (proton acceptor) is an active-site residue. 218-219 (GT) lines the substrate pocket.

This sequence belongs to the diaminopimelate epimerase family. Homodimer.

It is found in the cytoplasm. It carries out the reaction (2S,6S)-2,6-diaminopimelate = meso-2,6-diaminopimelate. It functions in the pathway amino-acid biosynthesis; L-lysine biosynthesis via DAP pathway; DL-2,6-diaminopimelate from LL-2,6-diaminopimelate: step 1/1. Functionally, catalyzes the stereoinversion of LL-2,6-diaminopimelate (L,L-DAP) to meso-diaminopimelate (meso-DAP), a precursor of L-lysine and an essential component of the bacterial peptidoglycan. The chain is Diaminopimelate epimerase from Magnetococcus marinus (strain ATCC BAA-1437 / JCM 17883 / MC-1).